A 104-amino-acid polypeptide reads, in one-letter code: Large ribosomal subunit protein uL23 (104 aa).

This sequence belongs to the universal ribosomal protein uL23 family. Part of the 50S ribosomal subunit. Contacts protein L29, and trigger factor when it is bound to the ribosome.

One of the early assembly proteins it binds 23S rRNA. One of the proteins that surrounds the polypeptide exit tunnel on the outside of the ribosome. Forms the main docking site for trigger factor binding to the ribosome. In Neisseria meningitidis serogroup B (strain ATCC BAA-335 / MC58), this protein is Large ribosomal subunit protein uL23.